We begin with the raw amino-acid sequence, 58 residues long: Probable ferredoxin (58 aa).

4Fe-4S ferredoxin-type domains follow at residues 2–30 (VAKVNVDLCTGCGSCVDECPAAAISLNDD) and 31–58 (GIATVDESECLDCGSCEDACPNNAITIE). Residues C10, C13, C16, C20, C40, C43, C46, and C50 each contribute to the [4Fe-4S] cluster site.

[4Fe-4S] cluster serves as cofactor.

Its function is as follows. Ferredoxins are iron-sulfur proteins that transfer electrons in a wide variety of metabolic reactions. The protein is Probable ferredoxin of Methanosarcina thermophila.